A 291-amino-acid polypeptide reads, in one-letter code: Shikimate dehydrogenase (NADP(+)) (291 aa).

Shikimate is bound by residues 23 to 25 (SFS) and Thr-70. Lys-74 acts as the Proton acceptor in catalysis. Residues Asn-95 and Asp-110 each coordinate shikimate. NADP(+) is bound by residues 135–139 (GAGGA) and Leu-232. A shikimate-binding site is contributed by Tyr-234. Position 255 (Gly-255) interacts with NADP(+).

It belongs to the shikimate dehydrogenase family. In terms of assembly, homodimer.

The catalysed reaction is shikimate + NADP(+) = 3-dehydroshikimate + NADPH + H(+). Its pathway is metabolic intermediate biosynthesis; chorismate biosynthesis; chorismate from D-erythrose 4-phosphate and phosphoenolpyruvate: step 4/7. In terms of biological role, involved in the biosynthesis of the chorismate, which leads to the biosynthesis of aromatic amino acids. Catalyzes the reversible NADPH linked reduction of 3-dehydroshikimate (DHSA) to yield shikimate (SA). This Desulforamulus reducens (strain ATCC BAA-1160 / DSM 100696 / MI-1) (Desulfotomaculum reducens) protein is Shikimate dehydrogenase (NADP(+)).